Consider the following 137-residue polypeptide: uncharacterized protein (137 aa).

The Sm domain maps to Ser30–Ile105.

This is an uncharacterized protein from Dictyostelium discoideum (Social amoeba).